We begin with the raw amino-acid sequence, 697 residues long: PHD finger protein At2g01810 (697 aa).

Disordered stretches follow at residues 319 to 362 (DENS…QYYS) and 457 to 478 (EQKR…TSTT). Residues 339 to 349 (SGRDTVLDDHN) are compositionally biased toward basic and acidic residues. Residues 635–685 (TVDCKCGARDDDGERMVACDACKVWHHTLCNSIEDDEAVPSVFLCNMCYGD) form a PHD-type zinc finger.

It is found in the nucleus. In Arabidopsis thaliana (Mouse-ear cress), this protein is PHD finger protein At2g01810.